Consider the following 538-residue polypeptide: Putative cysteine ligase BshC (538 aa).

Residues 248–268 (ISKYKEVQEGLRNQQEVIKEL) adopt a coiled-coil conformation.

The protein belongs to the BshC family.

Functionally, involved in bacillithiol (BSH) biosynthesis. May catalyze the last step of the pathway, the addition of cysteine to glucosamine malate (GlcN-Mal) to generate BSH. This chain is Putative cysteine ligase BshC, found in Bacillus cereus (strain G9842).